The chain runs to 440 residues: MESQQLSQHSPIFHGSACASVTSKEVQTTQDPLDISASKTEECEKVSTQANSQQPTTPPSSAVPENHHHASPQAAQVPLPQNGPYPQQRMMNTQQANISGWPVYGHPSLMPYPPYQMSPMYAPPGAQSQFTQYPQYVGTHLNTPSPESGNSFPDSSSAKSNMTSTNQHVRPPPILTSPNDFLNWVKIYIKFLQNSNLGDIIPTATRKAVRQMTDDELTFLCHTFQLFAPSQFLPPWVKDILSVDYTDIMKILSKSINKMQSDTQEVNDITTLATLHYNGSTPADAFEAEVTNILDRLNNNGIPINNKVACQFIMRGLSGEYKFLPYARHRCIHMTVADLFSDIHSMYEEQQESKRNKSTYRRSPSDEKKDSRTYTNTTKPKSITRNSQKPNNSQSRTARAHNVSTFNNSPGPDNDLIRGSTTEPIQLKNTHDLHLRPGTY.

Polar residues-rich tracts occupy residues 20–31 (SVTSKEVQTTQD), 46–55 (VSTQANSQQP), and 137–168 (VGTH…TNQH). Disordered stretches follow at residues 20-84 (SVTS…QNGP), 137-173 (VGTH…RPPP), and 350-424 (QQES…TTEP). The tract at residues 299-401 (NNGIPINNKV…NSQSRTARAH (103 aa)) is RNA-binding. Positions 363-372 (SPSDEKKDSR) are enriched in basic and acidic residues. Residues 373–411 (TYTNTTKPKSITRNSQKPNNSQSRTARAHNVSTFNNSPG) show a composition bias toward polar residues.

Homotrimer.

It localises to the cytoplasm. Functionally, capsid protein (CA) is the structural component of the virus-like particle (VLP), forming the shell that encapsulates the retrotransposons dimeric RNA genome. The particles are assembled from trimer-clustered units and there are holes in the capsid shells that allow for the diffusion of macromolecules. CA also has nucleocapsid-like chaperone activity, promoting primer tRNA(i)-Met annealing to the multipartite primer-binding site (PBS), dimerization of Ty1 RNA and initiation of reverse transcription. The sequence is that of Transposon Ty1-BL Gag polyprotein (TY1A-BL) from Saccharomyces cerevisiae (strain ATCC 204508 / S288c) (Baker's yeast).